The following is a 1114-amino-acid chain: Probable guanine nucleotide exchange factor MCF2L2 (1114 aa).

The CRAL-TRIO domain occupies Pro11–His193. A Spectrin repeat occupies Gln323–Glu428. The interval Gln530–Leu614 is disordered. The span at Lys546–Val559 shows a compositional bias: polar residues. The span at Leu577–Pro606 shows a compositional bias: basic and acidic residues. Residues Pro619–Ala822 enclose the DH domain. Positions Asp834–Met954 constitute a PH domain. Residues Asp962–Gly975 are compositionally biased toward polar residues. The segment at Asp962 to Ser1114 is disordered. Positions Asn986–Pro997 are enriched in basic and acidic residues. The span at Thr1017–Glu1028 shows a compositional bias: acidic residues. Basic and acidic residues-rich tracts occupy residues Asp1043–Glu1067 and Thr1074–Ala1084.

Belongs to the MCF2 family. In terms of tissue distribution, significantly expressed in brain and modestly in pancreas, brain and testis.

Its function is as follows. Probably functions as a guanine nucleotide exchange factor. This Homo sapiens (Human) protein is Probable guanine nucleotide exchange factor MCF2L2 (MCF2L2).